We begin with the raw amino-acid sequence, 149 residues long: Ribonuclease pancreatic (149 aa).

Positions 1–25 (MGLEKSLILFPLFFLLLGWVQPSLG) are cleaved as a signal peptide. Substrate-binding residues include lysine 32 and arginine 35. Residue histidine 37 is the Proton acceptor of the active site. Disulfide bonds link cysteine 51–cysteine 109, cysteine 65–cysteine 120, cysteine 83–cysteine 135, and cysteine 90–cysteine 97. Substrate is bound by residues 66-70 (KPVNT) and lysine 91. The active-site Proton donor is histidine 144.

This sequence belongs to the pancreatic ribonuclease family. Monomer. Interacts with and forms tight 1:1 complexes with RNH1. Dimerization of two such complexes may occur. Interaction with RNH1 inhibits this protein. In terms of tissue distribution, pancreas.

It localises to the secreted. The enzyme catalyses an [RNA] containing cytidine + H2O = an [RNA]-3'-cytidine-3'-phosphate + a 5'-hydroxy-ribonucleotide-3'-[RNA].. The catalysed reaction is an [RNA] containing uridine + H2O = an [RNA]-3'-uridine-3'-phosphate + a 5'-hydroxy-ribonucleotide-3'-[RNA].. Endonuclease that catalyzes the cleavage of RNA on the 3' side of pyrimidine nucleotides. Acts on single-stranded and double-stranded RNA. In Mus musculus (Mouse), this protein is Ribonuclease pancreatic (Rnase1).